Reading from the N-terminus, the 425-residue chain is tRNA(Ile)-lysidine synthase (425 aa).

ATP is bound at residue 27–32 (SGGLDS).

It belongs to the tRNA(Ile)-lysidine synthase family.

Its subcellular location is the cytoplasm. It carries out the reaction cytidine(34) in tRNA(Ile2) + L-lysine + ATP = lysidine(34) in tRNA(Ile2) + AMP + diphosphate + H(+). Ligates lysine onto the cytidine present at position 34 of the AUA codon-specific tRNA(Ile) that contains the anticodon CAU, in an ATP-dependent manner. Cytidine is converted to lysidine, thus changing the amino acid specificity of the tRNA from methionine to isoleucine. The sequence is that of tRNA(Ile)-lysidine synthase from Streptococcus pneumoniae (strain 70585).